The primary structure comprises 151 residues: Glutamate mutase sigma subunit 1 (151 aa).

The region spanning 7–140 (PRTVILGVIG…EMLREDLQLT (134 aa)) is the B12-binding domain. Adenosylcob(III)alamin contacts are provided by residues 17-21 (SDAHV), histidine 20, 65-67 (SSL), and 96-100 (NLAVG).

Belongs to the methylaspartate mutase GlmS subunit family. In terms of assembly, heterotetramer composed of 2 epsilon subunits (GlmE) and 2 sigma subunits (GlmS). GlmE exists as a homodimer and GlmS as a monomer. The cofactor is adenosylcob(III)alamin.

The catalysed reaction is (2S,3S)-3-methyl-L-aspartate = L-glutamate. It functions in the pathway amino-acid degradation; L-glutamate degradation via mesaconate pathway; acetate and pyruvate from L-glutamate: step 1/4. Catalyzes the carbon skeleton rearrangement of L-glutamate to L-threo-3-methylaspartate ((2S,3S)-3-methylaspartate). The chain is Glutamate mutase sigma subunit 1 from Haloarcula marismortui (strain ATCC 43049 / DSM 3752 / JCM 8966 / VKM B-1809) (Halobacterium marismortui).